The primary structure comprises 615 residues: Nuclear cap-binding protein subunit 3 (615 aa).

A Glycyl lysine isopeptide (Lys-Gly) (interchain with G-Cter in SUMO2) cross-link involves residue K12. Over residues A15–E27 the composition is skewed to low complexity. The tract at residues A15 to E43 is disordered. S25 bears the Phosphoserine mark. A Glycyl lysine isopeptide (Lys-Gly) (interchain with G-Cter in SUMO2) cross-link involves residue K70. Phosphoserine is present on S73. The RNA recognition motif (RRM) domain stretch occupies residues E126 to M187. The WLDD motif; essential for 7-methylguanosine-containing mRNA cap binding signature appears at W155–D158. Disordered stretches follow at residues P182 to L233 and H332 to D400. Residues D185 to D208 show a composition bias toward basic and acidic residues. K186 participates in a covalent cross-link: Glycyl lysine isopeptide (Lys-Gly) (interchain with G-Cter in SUMO2). Phosphoserine occurs at positions 209 and 210. Composition is skewed to acidic residues over residues S209 to L230 and E341 to A360. Over residues D361–L383 the composition is skewed to basic and acidic residues. T408 carries the post-translational modification Phosphothreonine. S410 carries the post-translational modification Phosphoserine. Disordered stretches follow at residues S430–P454 and E467–S615. Over residues V506–S516 the composition is skewed to basic and acidic residues. Residue K536 forms a Glycyl lysine isopeptide (Lys-Gly) (interchain with G-Cter in SUMO2) linkage. Basic and acidic residues-rich tracts occupy residues K549–G564 and I580–L593. The residue at position 563 (S563) is a Phosphoserine. Residues E606 to S615 show a composition bias toward low complexity. The residue at position 615 (S615) is a Phosphoserine.

Belongs to the NCBP3 family. Component of an alternative cap-binding complex (CBC) composed of NCBP1/CBP80 and NCBP3. Interacts with SRRT, KPNA3, THOC5 and EIF4A3.

Its subcellular location is the nucleus. It is found in the cytoplasm. Associates with NCBP1/CBP80 to form an alternative cap-binding complex (CBC) which plays a key role in mRNA export. NCBP3 serves as adapter protein linking the capped RNAs (m7GpppG-capped RNA) to NCBP1/CBP80. Unlike the conventional CBC with NCBP2 which binds both small nuclear RNA (snRNA) and messenger (mRNA) and is involved in their export from the nucleus, the alternative CBC with NCBP3 does not bind snRNA and associates only with mRNA thereby playing a role in only mRNA export. The alternative CBC is particularly important in cellular stress situations such as virus infections and the NCBP3 activity is critical to inhibit virus growth. This chain is Nuclear cap-binding protein subunit 3, found in Mus musculus (Mouse).